Reading from the N-terminus, the 535-residue chain is Keratin, type II cytoskeletal 79 (535 aa).

The span at 1-12 (MRSSVSRQTYST) shows a compositional bias: polar residues. The interval 1–52 (MRSSVSRQTYSTKGGFSSNSASGGSGSQARTSFSSVTVSRSSGSGGGAHCGP) is disordered. The tract at residues 1–141 (MRSSVSRQTY…DPEIQRVRTQ (141 aa)) is head. Over residues 32–42 (SFSSVTVSRSS) the composition is skewed to low complexity. Gly residues predominate over residues 43-52 (GSGGGAHCGP). Positions 142–177 (EREQIKTLNNKFASFIDKVRFLEQQNKVLETKWALL) are coil 1A. The region spanning 142-457 (EREQIKTLNN…KLLESEESRM (316 aa)) is the IF rod domain. A linker 1 region spans residues 178 to 198 (QEQGQNLGVTRNNLEPLFEAY). Residues 199-290 (LGSMRSTLDR…QLYEMELSQV (92 aa)) form a coil 1B region. The tract at residues 291–314 (QTHVSNTNVVLSMDNNRNLDLDSI) is linker 12. The coil 2 stretch occupies residues 315 to 453 (IAEVKAQYEL…ATYRKLLESE (139 aa)). The interval 454 to 535 (ESRMSGECPS…TTVKTSSQRY (82 aa)) is tail.

Belongs to the intermediate filament family. As to quaternary structure, heterotetramer of two type I and two type II keratins. Expressed in skeletal muscle, skin and scalp, but not in any other tissues or organs examined.

The polypeptide is Keratin, type II cytoskeletal 79 (KRT79) (Homo sapiens (Human)).